Reading from the N-terminus, the 287-residue chain is Large ribosomal subunit protein uL2 (287 aa).

The segment at 203 to 287 (LSAGKAGRNR…SKRGRGGRES (85 aa)) is disordered. Composition is skewed to basic residues over residues 209 to 220 (GRNRWKGRRPKV) and 258 to 287 (KTRK…GRES).

It belongs to the universal ribosomal protein uL2 family. As to quaternary structure, part of the 50S ribosomal subunit. Forms a bridge to the 30S subunit in the 70S ribosome.

Functionally, one of the primary rRNA binding proteins. Required for association of the 30S and 50S subunits to form the 70S ribosome, for tRNA binding and peptide bond formation. It has been suggested to have peptidyltransferase activity; this is somewhat controversial. Makes several contacts with the 16S rRNA in the 70S ribosome. In Nostoc sp. (strain PCC 7120 / SAG 25.82 / UTEX 2576), this protein is Large ribosomal subunit protein uL2.